Reading from the N-terminus, the 1078-residue chain is Nonribosomal peptide synthetase aneB (1078 aa).

The segment at 20-417 is adenylation; it reads FQQNVLDRPD…HGRKDTQVKI (398 aa). The 77-residue stretch at 559-635 folds into the Carrier domain; the sequence is MPTTPLERQM…TLCQHVSVRP (77 aa). The residue at position 596 (Ser596) is an O-(pantetheine 4'-phosphoryl)serine. The interval 699–1013 is condensation; the sequence is NYTLRLDVKL…HEMGYYGPVT (315 aa).

Belongs to the NRP synthetase family.

It catalyses the reaction holo-[peptidyl-carrier protein] + L-proline + ATP = L-prolyl-[peptidyl-carrier protein] + AMP + diphosphate. The protein operates within secondary metabolite biosynthesis. In terms of biological role, nonribosomal peptide synthetase; part of the gene cluster that mediates the biosynthesis of aculenes, a unique type of norsesquiterpenes that contain a nordaucane skeleton linked to an L-proline moiety and are of mixed biosynthetic origin. The pathway begins with the synthesis of dauca-4,7-diene by the terpene cyclase aneC using farnesyl pyrophosphate (FPP) as substrate. The cytochrome P450 monooxygenase aneF then performs the initial oxidation at C-12 of dauca-4,7-diene to yield asperaculane D. Asperaculane D is substrate of the cytochrome P450 monooxygenase aneD for C-10 hydroxylation to yield asperaculane E. The cytochrome P450 monooxygenase aneG then converts asperaculane E into aculene D via C-2 oxidation. The monomodular nonribosomal peptide synthase aneB adenylates L-proline and the thiohydrolase aneE transfers this activated L-proline derivative to aculenes D and C to produce respectively aculenes B and A. The dioxygenase aneA converts aculene D into aculene C, and aculene B into aculene A by introducing the 5,6-alkene moiety. Asperculanes A, B, C and F, as well as 14-prolyl asperculane C, might be shunt products of the pathway. This Aspergillus aculeatus (strain ATCC 16872 / CBS 172.66 / WB 5094) protein is Nonribosomal peptide synthetase aneB.